Reading from the N-terminus, the 154-residue chain is Nascent polypeptide-associated complex subunit beta (154 aa).

In terms of domain architecture, NAC-A/B spans 34 to 99 (EQDDTKLIEA…PQEKDVTQLI (66 aa)). The tract at residues 125 to 154 (KNPELNAGGAEGAEEDIPDLIEGQKFDDVE) is disordered.

The protein belongs to the NAC-beta family. Part of the nascent polypeptide-associated complex (NAC), consisting of EGD2 and EGD1. NAC associates with ribosomes via EGD1.

The protein localises to the cytoplasm. It is found in the nucleus. In terms of biological role, component of the nascent polypeptide-associated complex (NAC), a dynamic component of the ribosomal exit tunnel, protecting the emerging polypeptides from interaction with other cytoplasmic proteins to ensure appropriate nascent protein targeting. The NAC complex also promotes mitochondrial protein import by enhancing productive ribosome interactions with the outer mitochondrial membrane and blocks the inappropriate interaction of ribosomes translating non-secretory nascent polypeptides with translocation sites in the membrane of the endoplasmic reticulum. EGD1 may act as a transcription factor that exert a negative effect on the expression of several genes that are transcribed by RNA polymerase II. This Debaryomyces hansenii (strain ATCC 36239 / CBS 767 / BCRC 21394 / JCM 1990 / NBRC 0083 / IGC 2968) (Yeast) protein is Nascent polypeptide-associated complex subunit beta (EGD1).